Here is an 889-residue protein sequence, read N- to C-terminus: Alanine--tRNA ligase (889 aa).

Zn(2+) contacts are provided by His-566, His-570, Cys-683, and His-687.

The protein belongs to the class-II aminoacyl-tRNA synthetase family. Zn(2+) serves as cofactor.

It is found in the cytoplasm. The enzyme catalyses tRNA(Ala) + L-alanine + ATP = L-alanyl-tRNA(Ala) + AMP + diphosphate. Functionally, catalyzes the attachment of alanine to tRNA(Ala) in a two-step reaction: alanine is first activated by ATP to form Ala-AMP and then transferred to the acceptor end of tRNA(Ala). Also edits incorrectly charged Ser-tRNA(Ala) and Gly-tRNA(Ala) via its editing domain. The protein is Alanine--tRNA ligase of Herpetosiphon aurantiacus (strain ATCC 23779 / DSM 785 / 114-95).